An 89-amino-acid polypeptide reads, in one-letter code: Small ribosomal subunit protein uS15 (89 aa).

Positions 1-18 are enriched in basic and acidic residues; that stretch reads MALSAQEKDAIVKEHQTS. The segment at 1–25 is disordered; it reads MALSAQEKDAIVKEHQTSETDTGSP.

The protein belongs to the universal ribosomal protein uS15 family. In terms of assembly, part of the 30S ribosomal subunit. Forms a bridge to the 50S subunit in the 70S ribosome, contacting the 23S rRNA.

Functionally, one of the primary rRNA binding proteins, it binds directly to 16S rRNA where it helps nucleate assembly of the platform of the 30S subunit by binding and bridging several RNA helices of the 16S rRNA. Forms an intersubunit bridge (bridge B4) with the 23S rRNA of the 50S subunit in the ribosome. In Teredinibacter turnerae (strain ATCC 39867 / T7901), this protein is Small ribosomal subunit protein uS15.